Here is a 131-residue protein sequence, read N- to C-terminus: uncharacterized protein (131 aa).

Residues 4–44 adopt a coiled-coil conformation; sequence QKPEQDVNKKIEELEKKVQELQEQLEKTKQAVKTVASILDN.

This is an uncharacterized protein from Sulfolobus islandicus filamentous virus (isolate Iceland/Hveragerdi) (SIFV).